The primary structure comprises 171 residues: 3-hydroxydecanoyl-[acyl-carrier-protein] dehydratase (171 aa).

H70 is an active-site residue.

The protein belongs to the thioester dehydratase family. FabA subfamily. Homodimer.

The protein resides in the cytoplasm. It carries out the reaction a (3R)-hydroxyacyl-[ACP] = a (2E)-enoyl-[ACP] + H2O. It catalyses the reaction (3R)-hydroxydecanoyl-[ACP] = (2E)-decenoyl-[ACP] + H2O. The enzyme catalyses (2E)-decenoyl-[ACP] = (3Z)-decenoyl-[ACP]. It participates in lipid metabolism; fatty acid biosynthesis. Necessary for the introduction of cis unsaturation into fatty acids. Catalyzes the dehydration of (3R)-3-hydroxydecanoyl-ACP to E-(2)-decenoyl-ACP and then its isomerization to Z-(3)-decenoyl-ACP. Can catalyze the dehydratase reaction for beta-hydroxyacyl-ACPs with saturated chain lengths up to 16:0, being most active on intermediate chain length. The polypeptide is 3-hydroxydecanoyl-[acyl-carrier-protein] dehydratase (Shewanella sediminis (strain HAW-EB3)).